A 393-amino-acid polypeptide reads, in one-letter code: Stearoyl-[acyl-carrier-protein] 9-desaturase, chloroplastic (393 aa).

Residues 1–30 (MALNFNSPTFQSIKTTRRPCSPLRSPRVFM) constitute a chloroplast transit peptide. The Fe cation site is built by Glu-135, Glu-173, His-176, Glu-226, Glu-259, and His-262.

It belongs to the fatty acid desaturase type 2 family. Homodimer. Fe(2+) serves as cofactor.

Its subcellular location is the plastid. The protein localises to the chloroplast. It catalyses the reaction octadecanoyl-[ACP] + 2 reduced [2Fe-2S]-[ferredoxin] + O2 + 2 H(+) = (9Z)-octadecenoyl-[ACP] + 2 oxidized [2Fe-2S]-[ferredoxin] + 2 H2O. It participates in lipid metabolism; fatty acid metabolism. Functionally, converts stearoyl-ACP to oleoyl-ACP by introduction of a cis double bond between carbons 9 and 10 of the acyl chain. In Solanum commersonii (Commerson's wild potato), this protein is Stearoyl-[acyl-carrier-protein] 9-desaturase, chloroplastic.